We begin with the raw amino-acid sequence, 246 residues long: NH(3)-dependent NAD(+) synthetase (246 aa).

ATP is bound at residue 29-36 (GLSGGIDS). Aspartate 35 is a Mg(2+) binding site. Arginine 110 contacts deamido-NAD(+). Threonine 130 provides a ligand contact to ATP. A Mg(2+)-binding site is contributed by glutamate 135. ATP-binding residues include lysine 159 and serine 181.

Belongs to the NAD synthetase family. Homodimer.

It carries out the reaction deamido-NAD(+) + NH4(+) + ATP = AMP + diphosphate + NAD(+) + H(+). It participates in cofactor biosynthesis; NAD(+) biosynthesis; NAD(+) from deamido-NAD(+) (ammonia route): step 1/1. Its function is as follows. Catalyzes the ATP-dependent amidation of deamido-NAD to form NAD. Uses ammonia as a nitrogen source. In Campylobacter jejuni subsp. jejuni serotype O:2 (strain ATCC 700819 / NCTC 11168), this protein is NH(3)-dependent NAD(+) synthetase.